A 532-amino-acid polypeptide reads, in one-letter code: 2,3-bisphosphoglycerate-independent phosphoglycerate mutase (532 aa).

Mn(2+) contacts are provided by aspartate 15 and serine 65. Residue serine 65 is the Phosphoserine intermediate of the active site. Residues histidine 126, 156–157, arginine 188, arginine 194, 258–261, and lysine 331 each bind substrate; these read RD and RPDR. The Mn(2+) site is built by aspartate 398, histidine 402, aspartate 439, histidine 440, and histidine 457.

The protein belongs to the BPG-independent phosphoglycerate mutase family. In terms of assembly, monomer. Mn(2+) serves as cofactor.

The catalysed reaction is (2R)-2-phosphoglycerate = (2R)-3-phosphoglycerate. It participates in carbohydrate degradation; glycolysis; pyruvate from D-glyceraldehyde 3-phosphate: step 3/5. Functionally, catalyzes the interconversion of 2-phosphoglycerate and 3-phosphoglycerate. This chain is 2,3-bisphosphoglycerate-independent phosphoglycerate mutase, found in Rippkaea orientalis (strain PCC 8801 / RF-1) (Cyanothece sp. (strain PCC 8801)).